Here is a 254-residue protein sequence, read N- to C-terminus: 5'-nucleotidase SurE (254 aa).

4 residues coordinate a divalent metal cation: aspartate 8, aspartate 9, serine 38, and asparagine 91.

This sequence belongs to the SurE nucleotidase family. A divalent metal cation serves as cofactor.

The protein localises to the cytoplasm. The enzyme catalyses a ribonucleoside 5'-phosphate + H2O = a ribonucleoside + phosphate. Functionally, nucleotidase that shows phosphatase activity on nucleoside 5'-monophosphates. The sequence is that of 5'-nucleotidase SurE from Anaeromyxobacter sp. (strain Fw109-5).